Here is a 1830-residue protein sequence, read N- to C-terminus: Dedicator of cytokinesis protein 2 (1830 aa).

The 62-residue stretch at 8 to 69 (DKERHGVAIY…PKSFIHIKEV (62 aa)) folds into the SH3 domain. Lysine 304 carries the post-translational modification N6-acetyllysine. The region spanning 423 to 607 (RNDIYITLLQ…DVFSISTLVC (185 aa)) is the C2 DOCK-type domain. 2 positions are modified to phosphoserine: serine 588 and serine 593. Residue lysine 738 is modified to N6-acetyllysine. The interval 939 to 1476 (CMTAILNQMG…TSFVTAYKLP (538 aa)) is interaction with CRKL. In terms of domain architecture, DOCKER spans 1211–1622 (YKDNNREEMY…VEKEYGVREM (412 aa)). Positions 1651-1665 (MNSDCSTPSKPTSES) are enriched in polar residues. The segment at 1651 to 1704 (MNSDCSTPSKPTSESFDLELASPKTPRVEQEEPISPGSTLPEVKLRRSKKRTKR) is disordered. Phosphoserine is present on residues serine 1685, serine 1706, serine 1731, and serine 1784.

Belongs to the DOCK family. As to quaternary structure, homodimer. Interacts with RAC1 and RAC2. Interacts with CRKL and VAV. Interacts with CD3Z. As to expression, specifically expressed in hematopoietic cells. Highly expressed in peripheral blood leukocytes, and expressed at intermediate level in thymus and spleen. Expressed at very low level in the small intestine and colon.

It is found in the endomembrane system. The protein localises to the cytoplasm. It localises to the cytoskeleton. Functionally, involved in cytoskeletal rearrangements required for lymphocyte migration in response of chemokines. Activates RAC1 and RAC2, but not CDC42, by functioning as a guanine nucleotide exchange factor (GEF), which exchanges bound GDP for free GTP. May also participate in IL2 transcriptional activation via the activation of RAC2. This chain is Dedicator of cytokinesis protein 2 (DOCK2), found in Homo sapiens (Human).